We begin with the raw amino-acid sequence, 448 residues long: Microtubule-associated protein tau (448 aa).

Positions 1–16 are enriched in basic and acidic residues; sequence MAEPRQEFDVMEDHAQ. The tract at residues 1-264 is disordered; that stretch reads MAEPRQEFDV…GPMPDLKNVK (264 aa). Ala-2 carries the N-acetylalanine modification. Tyr-19 bears the Phosphotyrosine mark. Lys-33 is covalently cross-linked (Glycyl lysine isopeptide (Lys-Gly) (interchain with G-Cter in ubiquitin)). Ser-35 and Ser-50 each carry phosphoserine. Over residues 50 to 60 the composition is skewed to polar residues; it reads SETSDAKSTPT. Residues Thr-58 and Thr-60 each carry the phosphothreonine modification. Positions 71-89 are enriched in low complexity; that stretch reads EGAPGEQAAAQAPAEIPEG. Thr-100 carries the post-translational modification Phosphothreonine. Residues 119 to 135 are compositionally biased toward basic and acidic residues; that stretch reads KGKDGTGPDDKKTKGAD. Position 144 is a phosphothreonine (Thr-144). Arg-146 is subject to Omega-N-methylarginine. Lys-154 is subject to N6,N6-dimethyllysine; alternate. Lys-154 bears the N6-acetyllysine; alternate mark. 4 positions are modified to phosphothreonine: Thr-160, Thr-166, Thr-167, and Thr-172. The segment covering 163-176 has biased composition (low complexity); the sequence is PAKTTPTPKTSPAT. Over residues 189–200 the composition is skewed to basic and acidic residues; it reads KSERGESGKSGD. Phosphoserine occurs at positions 198 and 202. A compositionally biased stretch (low complexity) spans 201–221; that stretch reads RSGYSSPGSPGTPGSRSRTPS. The residue at position 204 (Tyr-204) is a Phosphotyrosine. 3 positions are modified to phosphoserine: Ser-205, Ser-206, and Ser-209. Phosphothreonine is present on residues Thr-212 and Thr-219. The residue at position 221 (Ser-221) is a Phosphoserine. Thr-224 is modified (phosphothreonine). Lys-232 carries the N6-acetyllysine modification. The residue at position 238 (Thr-238) is a Phosphothreonine. Phosphoserine occurs at positions 242 and 244. Tau/MAP repeat units lie at residues 251–281, 282–312, 313–343, and 344–375; these read QAAPGPMPDLKNVKSKIGSTENLKHQPGGGK, VQIINKKLDLSNVQSKCGSKDNIKHVPGGGS, VQIVYKPVDLSKVTSKCGSLGNIHHKPGGGQ, and VEVKSEKLDFKDRVQSKIGSLDNITHVPGGGN. A Glycyl lysine isopeptide (Lys-Gly) (interchain with G-Cter in ubiquitin) cross-link involves residue Lys-261. Lys-266 carries the post-translational modification N6-acetyllysine; alternate. N6-methyllysine; alternate is present on Lys-266. A Glycyl lysine isopeptide (Lys-Gly) (interchain with G-Cter in ubiquitin); alternate cross-link involves residue Lys-266. Ser-269 carries the phosphoserine modification. Lys-274 participates in a covalent cross-link: Glycyl lysine isopeptide (Lys-Gly) (interchain with G-Cter in ubiquitin). Residue Lys-288 is modified to N6-acetyllysine; alternate. Residue Lys-288 forms a Glycyl lysine isopeptide (Lys-Gly) (interchain with G-Cter in ubiquitin); alternate linkage. Residues Ser-292 and Ser-296 each carry the phosphoserine modification. Lys-297 carries the post-translational modification N6-acetyllysine. A disulfide bond links Cys-298 and Cys-329. Ser-300 bears the Phosphoserine mark. N6-acetyllysine; alternate is present on Lys-305. Lys-305 is covalently cross-linked (Glycyl lysine isopeptide (Lys-Gly) (interchain with G-Cter in ubiquitin); alternate). Residue Ser-312 is modified to Phosphoserine. Lys-318 is subject to N6,N6-dimethyllysine; alternate. 3 positions are modified to N6-acetyllysine; alternate: Lys-318, Lys-324, and Lys-328. Glycyl lysine isopeptide (Lys-Gly) (interchain with G-Cter in ubiquitin); alternate cross-links involve residues Lys-318, Lys-324, and Lys-328. Ser-331 bears the Phosphoserine mark. N6-acetyllysine; alternate occurs at positions 338, 350, and 354. Glycyl lysine isopeptide (Lys-Gly) (interchain with G-Cter in ubiquitin); alternate cross-links involve residues Lys-338, Lys-350, and Lys-354. Arg-356 bears the Omega-N-methylarginine mark. Ser-359 bears the Phosphoserine mark. Lys-360 is covalently cross-linked (Glycyl lysine isopeptide (Lys-Gly) (interchain with G-Cter in ubiquitin)). Ser-363 bears the Phosphoserine mark. Lys-376 carries the N6-acetyllysine; alternate modification. Lys-376 participates in a covalent cross-link: Glycyl lysine isopeptide (Lys-Gly) (interchain with G-Cter in ubiquitin); alternate. Lys-382 participates in a covalent cross-link: Glycyl lysine isopeptide (Lys-Gly) (interchain with G-Cter in ubiquitin). Lys-392 bears the N6-acetyllysine; alternate mark. Residue Lys-392 forms a Glycyl lysine isopeptide (Lys-Gly) (interchain with G-Cter in ubiquitin); alternate linkage. Tyr-401 carries the phosphotyrosine modification. Ser-403 and Ser-407 each carry phosphoserine. Residues 405-424 are disordered; the sequence is VVSGDTSPRHLSNVSSTGSI. Polar residues predominate over residues 408–423; sequence GDTSPRHLSNVSSTGS. Thr-410 carries the phosphothreonine modification. Phosphoserine occurs at positions 411, 416, 423, and 429. Residue Thr-434 is modified to Phosphothreonine.

Interacts with MARK1, MARK2, MARK3 and MARK4. Interacts with SQSTM1 when polyubiquitinated. Interacts with PSMC2 through SQSTM1. Interacts with FKBP4. Binds to CSNK1D. Interacts with SGK1. Interacts with PIN1. Interacts with LRRK2. Interacts with LRP1, leading to endocytosis; this interaction is reduced in the presence of LRPAP1/RAP. Post-translationally, polyubiquitinated. Requires functional TRAF6 and may provoke SQSTM1-dependent degradation by the proteasome. In terms of processing, phosphorylation at various serine and threonine residues in S-P or T-P motifs by proline-directed protein kinases (PDPK1, CDK1, CDK5, GSK3, MAPK) (a few sites per protein in interphase, more in mitosis), and at serine residues in K-X-G-S motifs by MAP/microtubule affinity-regulating kinase (MARK1, MARK2, MARK3, MARK4), causing detachment from microtubules, and their disassembly. Phosphorylation at Ser-269 by BRSK1 and BRSK2 in neurons affects ability to bind microtubules and plays a role in neuron polarization. Phosphorylated by PHK. Dephosphorylation at several serine and threonine residues by the serine/threonine phosphatase PPP5C. O-glycosylated; contains at least 4 GlcNAc. Site-specific or stoichiometric changes in glycosylation may modulate tau function and also play a role in PHF's formation. In terms of tissue distribution, expressed in neurons.

The protein resides in the cytoplasm. It localises to the cytosol. Its subcellular location is the cell membrane. It is found in the cytoskeleton. The protein localises to the cell projection. The protein resides in the axon. It localises to the dendrite. Its subcellular location is the secreted. In terms of biological role, promotes microtubule assembly and stability, and might be involved in the establishment and maintenance of neuronal polarity. The C-terminus binds axonal microtubules while the N-terminus binds neural plasma membrane components, suggesting that tau functions as a linker protein between both. Axonal polarity is predetermined by tau localization (in the neuronal cell) in the domain of the cell body defined by the centrosome. The short isoforms allow plasticity of the cytoskeleton whereas the longer isoforms may preferentially play a role in its stabilization. In Bos taurus (Bovine), this protein is Microtubule-associated protein tau (MAPT).